A 129-amino-acid chain; its full sequence is Thyroid hormone receptor alpha (129 aa).

The 104-residue stretch at 26-129 folds into the NR LBD domain; it reads AEWELIRMVT…EIMSLRAAVR (104 aa). Arg-91 provides a ligand contact to 3,3',5-triiodo-L-thyronine.

Belongs to the nuclear hormone receptor family. NR1 subfamily.

It localises to the nucleus. In terms of biological role, nuclear hormone receptor that can act as a repressor or activator of transcription. High affinity receptor for thyroid hormones, including triiodothyronine and thyroxine. The sequence is that of Thyroid hormone receptor alpha (thra1) from Sparus aurata (Gilthead sea bream).